A 608-amino-acid chain; its full sequence is Preterminal protein (608 aa).

The Nuclear localization signal signature appears at 338–347; it reads RLPMRRRRRR. The segment at 342-377 is disordered; sequence RRRRRRAPPPPPMSEELSEPEVEAFPPASPPRRSFE. S536 is modified (O-(5'-phospho-DNA)-serine).

It belongs to the adenoviridae terminal protein family. Heterodimer with the polymerase; this heterodimer binds to bp 9 to 18 of the genome. Interacts with host POU2F1; POU2F1 binds to the auxiliary sequences in the inverted terminal repeats and tethers the pTP-POL heterodimer to the origin DNA thereby participating in the assembly of the pre-initiation complex (POL-TP-DBP-NFIA-POU2F1). Preterminal protein is used to replicate viral genome, upon genomic encapsidation it is processed first into iTP and finally into TP by adenovirus protease.

It localises to the host nucleus matrix. Functionally, protein covalently bound to the viral DNA that acts as a primer for viral genomic replication by DNA strand displacement. Assembles on the viral origin of replication in an initiation complex with viral polymerase, DBP, host NFIA and host POU2F1/OCT1. During initiation, the polymerase covalently couples the first dCTP with Ser-580 of pTP. The terminal protein stimulates the template activity over 20 fold compared to protein-free templates. Neo-synthesized viral genomes are linked to two preterminal proteins, one for each 5' end. These new genomes are encapsidated in the nucleus, and during capsid maturation by viral protease, preterminal protein is first cleaved into intermediary (iTP), then into mature TP. May play a role in host nuclear matrix localization of genomic DNA. In Canine adenovirus serotype 1 (strain CLL) (CAdV-1), this protein is Preterminal protein.